The chain runs to 720 residues: Phosphoribosylformylglycinamidine synthase subunit PurL (720 aa).

Residue His47 is part of the active site. Positions 50 and 89 each coordinate ATP. Glu91 contributes to the Mg(2+) binding site. Substrate contacts are provided by residues 92–95 (SHNH) and Arg114. The Proton acceptor role is filled by His93. A Mg(2+)-binding site is contributed by Asp115. Residue Gln238 coordinates substrate. Residue Asp266 participates in Mg(2+) binding. 310 to 312 (ESQ) is a substrate binding site. ATP contacts are provided by Asp488 and Gly525. Asn526 is a Mg(2+) binding site. Substrate is bound at residue Ser528.

This sequence belongs to the FGAMS family. As to quaternary structure, monomer. Part of the FGAM synthase complex composed of 1 PurL, 1 PurQ and 2 PurS subunits.

It is found in the cytoplasm. It catalyses the reaction N(2)-formyl-N(1)-(5-phospho-beta-D-ribosyl)glycinamide + L-glutamine + ATP + H2O = 2-formamido-N(1)-(5-O-phospho-beta-D-ribosyl)acetamidine + L-glutamate + ADP + phosphate + H(+). The protein operates within purine metabolism; IMP biosynthesis via de novo pathway; 5-amino-1-(5-phospho-D-ribosyl)imidazole from N(2)-formyl-N(1)-(5-phospho-D-ribosyl)glycinamide: step 1/2. Its function is as follows. Part of the phosphoribosylformylglycinamidine synthase complex involved in the purines biosynthetic pathway. Catalyzes the ATP-dependent conversion of formylglycinamide ribonucleotide (FGAR) and glutamine to yield formylglycinamidine ribonucleotide (FGAM) and glutamate. The FGAM synthase complex is composed of three subunits. PurQ produces an ammonia molecule by converting glutamine to glutamate. PurL transfers the ammonia molecule to FGAR to form FGAM in an ATP-dependent manner. PurS interacts with PurQ and PurL and is thought to assist in the transfer of the ammonia molecule from PurQ to PurL. In Cereibacter sphaeroides (strain KD131 / KCTC 12085) (Rhodobacter sphaeroides), this protein is Phosphoribosylformylglycinamidine synthase subunit PurL.